The primary structure comprises 272 residues: MSTPTTPPRDAWARLRALTPARIALGRAGTSLPTASHLEFQLAHAQARDAVHLAFDPAPLQAVLQQRGRRSVLLHSAASDRHLYLQRPDLGRRLSDEAAEQLRGTTAVHGGGADLAVVVADGLSALAVHRHAGAMLEQIDALAAHEGWSLAPVTLIAQGRVAIGDEVGELLQARAVIVLIGERPGLSSPDSLGLYLTYAPRVGHTDAARNCISNIRGEGLSYAEAGHKLGYLLREAFRRKLSGVQLKDEADRPLLGTDTASQAAPRNFLLPE.

Adenosylcob(III)alamin contacts are provided by valine 161, glutamate 182, and cysteine 211.

Belongs to the EutC family. In terms of assembly, the basic unit is a heterodimer which dimerizes to form tetramers. The heterotetramers trimerize; 6 large subunits form a core ring with 6 small subunits projecting outwards. Adenosylcob(III)alamin serves as cofactor.

It is found in the bacterial microcompartment. The enzyme catalyses ethanolamine = acetaldehyde + NH4(+). The protein operates within amine and polyamine degradation; ethanolamine degradation. In terms of biological role, catalyzes the deamination of various vicinal amino-alcohols to oxo compounds. Allows this organism to utilize ethanolamine as the sole source of nitrogen and carbon in the presence of external vitamin B12. This is Ethanolamine ammonia-lyase small subunit from Xanthomonas campestris pv. campestris (strain ATCC 33913 / DSM 3586 / NCPPB 528 / LMG 568 / P 25).